The sequence spans 385 residues: V-type proton ATPase subunit C (385 aa).

It belongs to the V-ATPase C subunit family. In terms of assembly, V-ATPase is a heteromultimeric enzyme made up of two complexes: the ATP-hydrolytic V1 complex and the proton translocation V0 complex. The V1 complex consists of three catalytic AB heterodimers that form a heterohexamer, three peripheral stalks each consisting of EG heterodimers, one central rotor including subunits D and F, and the regulatory subunits C and H. The proton translocation complex V0 consists of the proton transport subunit a, a ring of proteolipid subunits c9c'', rotary subunit d, subunits e and f, and the accessory subunits VhaAC45 and ATP6AP2.

Its function is as follows. Subunit of the V1 complex of vacuolar(H+)-ATPase (V-ATPase), a multisubunit enzyme composed of a peripheral complex (V1) that hydrolyzes ATP and a membrane integral complex (V0) that translocates protons. V-ATPase is responsible for acidifying and maintaining the pH of intracellular compartments and in some cell types, is targeted to the plasma membrane, where it is responsible for acidifying the extracellular environment. Subunit C is necessary for the assembly of the catalytic sector of the enzyme and is likely to have a specific function in its catalytic activity. In Manduca sexta (Tobacco hawkmoth), this protein is V-type proton ATPase subunit C.